Reading from the N-terminus, the 453-residue chain is MTARIFAIFWLTLALVLMLVLMLPKLDSRQMTELLESEQRQGIMIEQHVEAELANDPPNDLMWWRRLFRAIDKWAPPGQRLLLVTSEGRVIGAERNEMQIIRNFIGQADNADHPQKKRYGRLEMVGPFSVRDGEDNYQLYLIRPASTSQSDFINLLFDRPLLLLIVTMLVSAPLLLWLAWSLAKPARKLKNAADEVAQGNLRQHPELEAGPQEFLAAGASFNQMVTALERMMTSQQRLLSDISHELRTPLTRLQLGTALLRRRSGESKELERIETEAHRLDSMINDLLVMSRNQAKNALVSETVKANQLWNEVLDNAAFEAEQMGKSFTVEYPPGPWPLYGNPNALESALENIVRNALRYSHTKISVSFSVDKDGITVNVDDDGPGVSPEDREQIFRPFYRTDEARDRESGGTGLGLAIVETAIQQHRGWVKADDSPLGGLRLTIWLPLYKRT.

At 1 to 4 (MTAR) the chain is on the cytoplasmic side. The chain crosses the membrane as a helical span at residues 5–25 (IFAIFWLTLALVLMLVLMLPK). Residues 26–159 (LDSRQMTELL…SDFINLLFDR (134 aa)) are Periplasmic-facing. The helical transmembrane segment at 160 to 180 (PLLLLIVTMLVSAPLLLWLAW) threads the bilayer. Positions 180 to 233 (WSLAKPARKLKNAADEVAQGNLRQHPELEAGPQEFLAAGASFNQMVTALERMMT) constitute an HAMP domain. The Cytoplasmic segment spans residues 181–453 (SLAKPARKLK…TIWLPLYKRT (273 aa)). The Histidine kinase domain occupies 241 to 451 (DISHELRTPL…RLTIWLPLYK (211 aa)). The active-site Nucleophile is the His-244. His-244 carries the phosphohistidine; by autocatalysis modification. ATP contacts are provided by residues 244 to 247 (HELR), 355 to 360 (RNALRY), Asp-382, 401 to 402 (RT), and 412 to 417 (GTGLGL).

As to quaternary structure, interacts with cognate response regulator CpxR.

It localises to the cell inner membrane. It catalyses the reaction ATP + protein L-histidine = ADP + protein N-phospho-L-histidine.. The two-component system is activated by envelope stress such as overexpression of some (misfolded) periplasmic proteins. In terms of biological role, histidine kinase member of the two-component regulatory system CpxA/CpxR which responds to envelope stress response by activating or, in some cases, repressing expression of downstream genes. Activates CpxR by phosphorylation. The protein is Sensor histidine kinase CpxA of Klebsiella pneumoniae subsp. pneumoniae (strain HS11286).